A 414-amino-acid chain; its full sequence is Putative nickel insertion protein (414 aa).

Residues 70–91 form a disordered region; the sequence is ATHHDHDHSQDQTHHHHADHAP.

It belongs to the LarC family.

In Picosynechococcus sp. (strain ATCC 27264 / PCC 7002 / PR-6) (Agmenellum quadruplicatum), this protein is Putative nickel insertion protein.